The chain runs to 117 residues: Large ribosomal subunit protein eL34 (117 aa).

At S12 the chain carries Phosphoserine. N6-acetyllysine occurs at positions 36 and 43. A Glycyl lysine isopeptide (Lys-Gly) (interchain with G-Cter in SUMO2) cross-link involves residue K108.

Belongs to the eukaryotic ribosomal protein eL34 family. In terms of assembly, component of the large ribosomal subunit.

It localises to the cytoplasm. The protein resides in the cytosol. Its subcellular location is the endoplasmic reticulum. Its function is as follows. Component of the large ribosomal subunit. The ribosome is a large ribonucleoprotein complex responsible for the synthesis of proteins in the cell. This is Large ribosomal subunit protein eL34 (RPL34) from Sus scrofa (Pig).